The following is a 158-amino-acid chain: Fucolectin (158 aa).

Residues 16–148 (KATQSAQLRG…TSESLHLCEV (133 aa)) form an F5/8 type C-like region. Residues Asn-35, Asp-38, Asn-40, and Ser-49 each contribute to the Ca(2+) site. Intrachain disulfides connect Cys-50-Cys-146, Cys-82-Cys-83, and Cys-108-Cys-124. Alpha-L-fucose is bound by residues His-52 and Arg-79. Residues 79-81 (RGD) carry the Cell attachment site motif. Residue Arg-86 participates in alpha-L-fucose binding. 2 residues coordinate Ca(2+): Cys-146 and Glu-147.

The protein belongs to the fucolectin family. Homotrimer.

The protein localises to the secreted. Acts as a defensive agent. Recognizes blood group fucosylated oligosaccharides including A, B, H and Lewis B-type antigens. Does not recognize Lewis A antigen and has low affinity for monovalent haptens. The protein is Fucolectin of Anguilla anguilla (European freshwater eel).